Reading from the N-terminus, the 512-residue chain is Transactivator/viroplasmin protein (512 aa).

2 disordered regions span residues 76–123 and 474–512; these read GNER…NPVA and ADSS…IPSI. Residues 476 to 487 show a composition bias toward polar residues; that stretch reads SSSTSGEQNNVE. Basic and acidic residues predominate over residues 499-512; sequence YDERSDDHKRIPSI.

It belongs to the caulimoviridae viroplasmin family.

The protein resides in the host cytoplasm. In terms of biological role, enhances the translation of downstream ORFs on polycistronic mRNAs derived from figwort mosaic virus. In Figwort mosaic virus (strain DxS) (FMV), this protein is Transactivator/viroplasmin protein.